A 485-amino-acid polypeptide reads, in one-letter code: N-succinylglutamate 5-semialdehyde dehydrogenase (485 aa).

220–225 lines the NAD(+) pocket; that stretch reads GSANTG. Catalysis depends on residues Glu243 and Cys278.

Belongs to the aldehyde dehydrogenase family. AstD subfamily.

The enzyme catalyses N-succinyl-L-glutamate 5-semialdehyde + NAD(+) + H2O = N-succinyl-L-glutamate + NADH + 2 H(+). It functions in the pathway amino-acid degradation; L-arginine degradation via AST pathway; L-glutamate and succinate from L-arginine: step 4/5. Its function is as follows. Catalyzes the NAD-dependent reduction of succinylglutamate semialdehyde into succinylglutamate. This Vibrio parahaemolyticus serotype O3:K6 (strain RIMD 2210633) protein is N-succinylglutamate 5-semialdehyde dehydrogenase.